A 783-amino-acid chain; its full sequence is Probable phosphoketolase (783 aa).

It belongs to the XFP family. Requires thiamine diphosphate as cofactor.

The chain is Probable phosphoketolase from Rhodopseudomonas palustris (strain ATCC BAA-98 / CGA009).